A 471-amino-acid polypeptide reads, in one-letter code: Ribulose bisphosphate carboxylase large chain (471 aa).

Substrate-binding residues include asparagine 115 and threonine 165. Lysine 167 serves as the catalytic Proton acceptor. Lysine 169 contributes to the substrate binding site. 3 residues coordinate Mg(2+): lysine 193, aspartate 195, and glutamate 196. Residue lysine 193 is modified to N6-carboxylysine. Catalysis depends on histidine 286, which acts as the Proton acceptor. Positions 287, 319, and 371 each coordinate substrate.

The protein belongs to the RuBisCO large chain family. Type I subfamily. Heterohexadecamer of 8 large chains and 8 small chains. Requires Mg(2+) as cofactor.

It localises to the carboxysome. It catalyses the reaction 2 (2R)-3-phosphoglycerate + 2 H(+) = D-ribulose 1,5-bisphosphate + CO2 + H2O. The enzyme catalyses D-ribulose 1,5-bisphosphate + O2 = 2-phosphoglycolate + (2R)-3-phosphoglycerate + 2 H(+). Its function is as follows. RuBisCO catalyzes two reactions: the carboxylation of D-ribulose 1,5-bisphosphate, the primary event in carbon dioxide fixation, as well as the oxidative fragmentation of the pentose substrate in the photorespiration process. Both reactions occur simultaneously and in competition at the same active site. This is Ribulose bisphosphate carboxylase large chain from Prochlorococcus marinus (strain MIT 9301).